The sequence spans 202 residues: uncharacterized protein (202 aa).

The chain crosses the membrane as a helical span at residues 10–30; the sequence is TAAIFLLCCTSVIILFTIAVV.

Belongs to the bacterial sugar transferase family.

Its subcellular location is the cell membrane. Functionally, may be involved in the production of the exopolysaccharide (EPS) component of the extracellular matrix during biofilm formation. EPS is responsible for the adhesion of chains of cells into bundles. This is an uncharacterized protein from Bacillus subtilis (strain 168).